The primary structure comprises 198 residues: MKTPSSLDFLTEALRRLPGVGPKSAQRMAYHLMQHDRDGAAMLGRALSQAVEKVQHCAMCNTFTEHEVCETCLDAERNPALLCVVETPGDQLMIEQTLTFKGLYFVLMGRLSPLDGIGPKDIHLEKLISRATDGIVQEVVLATNFTNEGEATAHYISETLKARGLKVSRLARGVPVGGELEYVDAGTIARAMLDRRTT.

The C4-type zinc finger occupies 57–72; it reads CAMCNTFTEHEVCETC. The Toprim domain maps to 80–175; it reads ALLCVVETPG…KVSRLARGVP (96 aa).

Belongs to the RecR family.

In terms of biological role, may play a role in DNA repair. It seems to be involved in an RecBC-independent recombinational process of DNA repair. It may act with RecF and RecO. In Janthinobacterium sp. (strain Marseille) (Minibacterium massiliensis), this protein is Recombination protein RecR.